Consider the following 234-residue polypeptide: tRNA (guanine-N(1)-)-methyltransferase (234 aa).

Residues G115 and V135–L140 contribute to the S-adenosyl-L-methionine site.

The protein belongs to the RNA methyltransferase TrmD family. As to quaternary structure, homodimer.

It localises to the cytoplasm. The catalysed reaction is guanosine(37) in tRNA + S-adenosyl-L-methionine = N(1)-methylguanosine(37) in tRNA + S-adenosyl-L-homocysteine + H(+). Specifically methylates guanosine-37 in various tRNAs. The chain is tRNA (guanine-N(1)-)-methyltransferase from Rickettsia typhi (strain ATCC VR-144 / Wilmington).